Reading from the N-terminus, the 638-residue chain is Golgin subfamily A member 8S (638 aa).

The span at 1–11 (MWPQARLPPHP) shows a compositional bias: pro residues. The interval 1-84 (MWPQARLPPH…GESPTSSATL (84 aa)) is disordered. Residues 50 to 62 (TNGSIHETATSGG) show a composition bias toward polar residues. Coiled coils occupy residues 105-160 (VSQL…LNTD), 223-275 (LEQS…MSQE), and 318-417 (EAEL…QQKQ). Disordered stretches follow at residues 427-453 (ALPGEGDGGGHLDSEGEEAPRPIPSIP), 510-532 (KDAALGGGHHQAGAQGGDEDEAA), and 556-575 (AHNPADEPGPGAPAPQELGA). Residues 434–446 (GGGHLDSEGEEAP) show a composition bias toward basic and acidic residues. The span at 514-525 (LGGGHHQAGAQG) shows a compositional bias: gly residues. A compositionally biased stretch (low complexity) spans 561 to 574 (DEPGPGAPAPQELG).

This sequence belongs to the GOLGA8 family.

This Homo sapiens (Human) protein is Golgin subfamily A member 8S.